Here is a 567-residue protein sequence, read N- to C-terminus: Diacylglycerol kinase epsilon (567 aa).

Residues 22–42 (LILWTLCSVLLPVFITFWCSL) traverse the membrane as a helical segment. Phorbol-ester/DAG-type zinc fingers lie at residues 59-108 (KHGW…RFQC) and 124-177 (PHHW…NEKC). A DAGKc domain is found at 215–356 (KQWTPLIILA…LDRWKVQVTN (142 aa)).

The protein belongs to the eukaryotic diacylglycerol kinase family. In terms of tissue distribution, expressed predominantly in testis. Expressed in endothelium, platelets and podocytes (at protein level).

Its subcellular location is the membrane. The protein resides in the cytoplasm. The catalysed reaction is a 1,2-diacyl-sn-glycerol + ATP = a 1,2-diacyl-sn-glycero-3-phosphate + ADP + H(+). It catalyses the reaction 1-hexadecanoyl-2-(5Z,8Z,11Z,14Z-eicosatetraenoyl)-sn-glycerol + ATP = 1-hexadecanoyl-2-(5Z,8Z,11Z,14Z-eicosatetraenoyl)-sn-glycero-3-phosphate + ADP + H(+). The enzyme catalyses 1-octadecanoyl-2-(5Z,8Z,11Z,14Z-eicosatetraenoyl)-sn-glycerol + ATP = 1-octadecanoyl-2-(5Z,8Z,11Z,14Z-eicosatetraenoyl)-sn-glycero-3-phosphate + ADP + H(+). It carries out the reaction 1-eicosanoyl-2-(5Z,8Z,11Z,14Z)-eicosatetraenoyl-sn-glycerol + ATP = 1-eicosanoyl-2-(5Z,8Z,11Z,14Z)-eicosatetraenoyl-sn-glycero-3-phosphate + ADP + H(+). The catalysed reaction is 1,2-di-(5Z,8Z,11Z,14Z)-eicosatetraenoyl-sn-glycerol + ATP = 1,2-di-(5Z,8Z,11Z,14Z)-eicosatetraenoyl-sn-glycero-3-phosphate + ADP + H(+). It catalyses the reaction 1-octadecanoyl-2-(9Z,12Z)-octadecadienoyl-sn-glycerol + ATP = 1-octadecanoyl-2-(9Z,12Z-octadecadienoyl)-sn-glycero-3-phosphate + ADP + H(+). The enzyme catalyses 1,2-di-(9Z,12Z-octadecadienoyl)-sn-glycerol + ATP = 1,2-di-(9Z,12Z-octadecadienoyl)-sn-glycero-3-phosphate + ADP + H(+). It carries out the reaction 1,2-di-(9Z-octadecenoyl)-sn-glycerol + ATP = 1,2-di-(9Z-octadecenoyl)-sn-glycero-3-phosphate + ADP + H(+). It functions in the pathway lipid metabolism; glycerolipid metabolism. Its activity is regulated as follows. Undergoes competitive inhibition by its own product 1,2-diacyl-sn-glycero-3-phosphate/phosphatidic acid. The strongest inhibition being observed in vitro with 1-octadecanoyl-2-(5Z,8Z,11Z,14Z-eicosatetraenoyl)-sn-glycero-3-phosphate, a major intermediate in the phosphatidylinositol turnover cycle and more generally by diacylglycerols with an arachidonoyl acyl chain at the sn-2 position. Functionally, membrane-bound diacylglycerol kinase that converts diacylglycerol/DAG into phosphatidic acid/phosphatidate/PA and regulates the respective levels of these two bioactive lipids. Thereby, acts as a central switch between the signaling pathways activated by these second messengers with different cellular targets and opposite effects in numerous biological processes. Also plays an important role in the biosynthesis of complex lipids. Displays specificity for diacylglycerol substrates with an arachidonoyl acyl chain at the sn-2 position, with the highest activity toward 1-octadecanoyl-2-(5Z,8Z,11Z,14Z-eicosatetraenoyl)-sn-glycerol the main diacylglycerol intermediate within the phosphatidylinositol turnover cycle. Can also phosphorylate diacylglycerol substrates with a linoleoyl acyl chain at the sn-2 position but much less efficiently. In Homo sapiens (Human), this protein is Diacylglycerol kinase epsilon (DGKE).